The primary structure comprises 508 residues: 2'-5'-oligoadenylate synthase-like protein 2 (508 aa).

Serine 69 is a binding site for ATP. Residues aspartate 81, aspartate 83, and aspartate 154 each contribute to the Mg(2+) site. The ATP site is built by arginine 213 and lysine 216. The 39-residue stretch at 435-473 folds into the Ubiquitin-like domain; sequence ILVFVKYPGGQSKPFTIDPDDTILDLKEKIEDAGGPCAE.

Belongs to the 2-5A synthase family. It depends on Mg(2+) as a cofactor. In terms of tissue distribution, strongly expressed in spleen dendritic cells, whereas, in bone marrow-derived dendritic cells, the amount increases during the maturation process. Expressed in many organs, the highest levels being in thymus, lung, and bone marrow.

The enzyme catalyses 3 ATP = 5'-triphosphoadenylyl-(2'-&gt;5')-adenylyl-(2'-&gt;5')-adenosine + 2 diphosphate. Its activity is regulated as follows. Produced as a latent enzyme which is activated by dsRNA generated during the course of viral infection. The dsRNA activator must be at least 15 nucleotides long, and no modification of the 2'-hydroxyl group is tolerated. ssRNA or dsDNA do not act as activators. In terms of biological role, interferon-induced, dsRNA-activated antiviral enzyme which plays a critical role in cellular innate antiviral response. Synthesizes oligomers of 2'-5'-oligoadenylates (2-5A) from ATP which then bind to the inactive monomeric form of ribonuclease L (RNase L) leading to its dimerization and subsequent activation. Activation of RNase L leads to degradation of cellular as well as viral RNA, resulting in the inhibition of protein synthesis, thus terminating viral replication. Can mediate the antiviral effect via the classical RNase L-dependent pathway or an alternative antiviral pathway independent of RNase L. The protein is 2'-5'-oligoadenylate synthase-like protein 2 (Oasl2) of Mus musculus (Mouse).